A 147-amino-acid polypeptide reads, in one-letter code: Leech anti-platelet protein (147 aa).

An N-terminal signal peptide occupies residues 1 to 21 (MNSFLFSLACSLLVAIPAISA). The segment at 21–71 (AQDEDAGGAGDETSEGEDTTGSDETPSTGGGGDGGNEETITAGNEDCWSKR) is disordered. The segment covering 22 to 41 (QDEDAGGAGDETSEGEDTTG) has biased composition (acidic residues). Intrachain disulfides connect cysteine 67-cysteine 145, cysteine 92-cysteine 117, and cysteine 96-cysteine 105.

In terms of processing, the N-terminus is blocked. As to expression, expressed by salivary glands.

It is found in the secreted. Functionally, inhibits collagen-stimulated platelet aggregation (IC(50)=60 nM), dense granule release and serotonin release. Does not inhibit platelet aggregation induced by ADP, arachidonic acid, and thrombin. In Haementeria officinalis (Mexican leech), this protein is Leech anti-platelet protein.